Consider the following 326-residue polypeptide: Glyoxylate/hydroxypyruvate reductase B (326 aa).

Residues Arg-237 and Glu-266 contribute to the active site. His-285 (proton donor) is an active-site residue.

The protein belongs to the D-isomer specific 2-hydroxyacid dehydrogenase family. GhrB subfamily. Homodimer.

The protein resides in the cytoplasm. The enzyme catalyses glycolate + NADP(+) = glyoxylate + NADPH + H(+). It catalyses the reaction (R)-glycerate + NAD(+) = 3-hydroxypyruvate + NADH + H(+). It carries out the reaction (R)-glycerate + NADP(+) = 3-hydroxypyruvate + NADPH + H(+). Its function is as follows. Catalyzes the NADPH-dependent reduction of glyoxylate and hydroxypyruvate into glycolate and glycerate, respectively. The sequence is that of Glyoxylate/hydroxypyruvate reductase B from Yersinia pseudotuberculosis serotype O:1b (strain IP 31758).